Here is a 470-residue protein sequence, read N- to C-terminus: Tubulin gamma chain (470 aa).

144-150 (AGGTGSG) contacts GTP.

This sequence belongs to the tubulin family.

It is found in the cytoplasm. Its subcellular location is the cytoskeleton. The protein resides in the microtubule organizing center. It localises to the spindle pole body. Tubulin is the major constituent of microtubules. The gamma chain is found at microtubule organizing centers (MTOC) such as the spindle poles or the centrosome, suggesting that it is involved in the minus-end nucleation of microtubule assembly. The sequence is that of Tubulin gamma chain (TUB4) from Eremothecium gossypii (strain ATCC 10895 / CBS 109.51 / FGSC 9923 / NRRL Y-1056) (Yeast).